The following is a 198-amino-acid chain: Translation machinery-associated protein 22 (198 aa).

The SUI1 domain occupies 100-171 (IIIKRSERTK…EIVEMIRQQV (72 aa)).

Belongs to the DENR family. In terms of assembly, interacts with the 40S ribosomal subunit.

Its subcellular location is the cytoplasm. The sequence is that of Translation machinery-associated protein 22 (TMA22) from Cryptococcus neoformans var. neoformans serotype D (strain B-3501A) (Filobasidiella neoformans).